A 716-amino-acid polypeptide reads, in one-letter code: UvrABC system protein C (716 aa).

Residues 14–94 (AEPGCYLMKD…IKRHRPRFNI (81 aa)) enclose the GIY-YIG domain. Positions 206-241 (TELVERLHGRMDEAADALRFEDAARLRDQLQAVERS) constitute a UVR domain.

It belongs to the UvrC family. Interacts with UvrB in an incision complex.

It localises to the cytoplasm. Functionally, the UvrABC repair system catalyzes the recognition and processing of DNA lesions. UvrC both incises the 5' and 3' sides of the lesion. The N-terminal half is responsible for the 3' incision and the C-terminal half is responsible for the 5' incision. This Anaeromyxobacter sp. (strain Fw109-5) protein is UvrABC system protein C.